Reading from the N-terminus, the 242-residue chain is 3-dehydroquinate dehydratase (242 aa).

Residues 39–41 (EIR) and Arg-73 contribute to the 3-dehydroquinate site. Catalysis depends on His-135, which acts as the Proton donor/acceptor. The Schiff-base intermediate with substrate role is filled by Lys-162. 3-dehydroquinate contacts are provided by Arg-203 and Gln-228.

The protein belongs to the type-I 3-dehydroquinase family. As to quaternary structure, homodimer.

It carries out the reaction 3-dehydroquinate = 3-dehydroshikimate + H2O. It functions in the pathway metabolic intermediate biosynthesis; chorismate biosynthesis; chorismate from D-erythrose 4-phosphate and phosphoenolpyruvate: step 3/7. Involved in the third step of the chorismate pathway, which leads to the biosynthesis of aromatic amino acids. Catalyzes the cis-dehydration of 3-dehydroquinate (DHQ) and introduces the first double bond of the aromatic ring to yield 3-dehydroshikimate. This Methanosarcina mazei (strain ATCC BAA-159 / DSM 3647 / Goe1 / Go1 / JCM 11833 / OCM 88) (Methanosarcina frisia) protein is 3-dehydroquinate dehydratase.